Here is a 660-residue protein sequence, read N- to C-terminus: Transcription activator of gluconeogenesis CHGG_09150 (660 aa).

Residues methionine 1–aspartate 12 are compositionally biased toward acidic residues. The interval methionine 1–arginine 52 is disordered. 2 stretches are compositionally biased toward basic and acidic residues: residues glutamine 13 to aspartate 24 and alanine 36 to arginine 49. The segment at residues cysteine 59–cysteine 87 is a DNA-binding region (zn(2)-C6 fungal-type). Disordered stretches follow at residues leucine 98–serine 144, phenylalanine 170–glycine 191, and proline 319–asparagine 368. Positions serine 129 to serine 144 are enriched in polar residues. Positions glutamine 173 to serine 184 are enriched in low complexity. Polar residues-rich tracts occupy residues threonine 320–proline 332 and threonine 344–asparagine 368. Residues serine 455–threonine 526 enclose the PAS domain. The tract at residues alanine 587–leucine 613 is disordered.

The protein belongs to the ERT1/acuK family.

The protein localises to the nucleus. Transcription factor which regulates nonfermentable carbon utilization. Activator of gluconeogenetic genes. The chain is Transcription activator of gluconeogenesis CHGG_09150 from Chaetomium globosum (strain ATCC 6205 / CBS 148.51 / DSM 1962 / NBRC 6347 / NRRL 1970) (Soil fungus).